A 304-amino-acid polypeptide reads, in one-letter code: Acetylglutamate kinase (304 aa).

Substrate-binding positions include 75–76 (GG), arginine 97, and asparagine 196.

This sequence belongs to the acetylglutamate kinase family. ArgB subfamily.

It localises to the cytoplasm. The enzyme catalyses N-acetyl-L-glutamate + ATP = N-acetyl-L-glutamyl 5-phosphate + ADP. The protein operates within amino-acid biosynthesis; L-arginine biosynthesis; N(2)-acetyl-L-ornithine from L-glutamate: step 2/4. In terms of biological role, catalyzes the ATP-dependent phosphorylation of N-acetyl-L-glutamate. In Corynebacterium urealyticum (strain ATCC 43042 / DSM 7109), this protein is Acetylglutamate kinase.